Reading from the N-terminus, the 340-residue chain is MNVFEPRLSSWLENAGDDDDVVLSSRIRLARNLKDEQFPVYEQKEEIVDNIAEVFDDNFTLIKMNQISLLQKALLVEKHLISPYMMNKSEYGAVLLNEEENVSIMLNEEDHLRIQCMTPGLRLFDALEAALQIDGYVEEKLSYAFDKEFGYLTSCVTNIGTGMRASVMVHLPGLVTTKRIKSVIEAIRSLGFVVRGIYGEGSMPASNIFQVSNQVTLGKTETEIVEDLTQVMEQIIMQERVARTTLKQKFHIALEDRVFRSYGLLMNCRIISMKEASDAISDIRLGVELGFFEHISRQKMNELVLFSQPAFLRREAGRDMDELEEKVIRAKVIREILGDK.

Residues 21 to 242 (VVLSSRIRLA…EQIIMQERVA (222 aa)) enclose the Phosphagen kinase C-terminal domain. Residues 24–28 (SSRIR), His-79, Arg-113, 164–168 (RASVM), and 195–200 (RGIYGE) contribute to the ATP site.

The protein belongs to the ATP:guanido phosphotransferase family.

The catalysed reaction is L-arginyl-[protein] + ATP = N(omega)-phospho-L-arginyl-[protein] + ADP + H(+). Functionally, catalyzes the specific phosphorylation of arginine residues in proteins. The sequence is that of Protein-arginine kinase from Listeria monocytogenes serotype 4b (strain CLIP80459).